We begin with the raw amino-acid sequence, 167 residues long: Large ribosomal subunit protein uL10 (167 aa).

It belongs to the universal ribosomal protein uL10 family. Part of the ribosomal stalk of the 50S ribosomal subunit. The N-terminus interacts with L11 and the large rRNA to form the base of the stalk. The C-terminus forms an elongated spine to which L12 dimers bind in a sequential fashion forming a multimeric L10(L12)X complex.

Its function is as follows. Forms part of the ribosomal stalk, playing a central role in the interaction of the ribosome with GTP-bound translation factors. This chain is Large ribosomal subunit protein uL10, found in Latilactobacillus sakei subsp. sakei (strain 23K) (Lactobacillus sakei subsp. sakei).